Consider the following 55-residue polypeptide: U2-theraphotoxin-Cg1a (55 aa).

Positions 1–19 (DSPAWLKSMERIFQSEERE) are excised as a propeptide. Cystine bridges form between Cys-20–Cys-34, Cys-27–Cys-39, and Cys-33–Cys-47.

The protein belongs to the neurotoxin 10 (Hwtx-1) family. 06 (F4b) subfamily. Expressed by the venom gland.

The protein resides in the secreted. Probable ion channel inhibitor. The polypeptide is U2-theraphotoxin-Cg1a (Chilobrachys guangxiensis (Chinese earth tiger tarantula)).